The chain runs to 277 residues: Ubiquinone biosynthesis protein COQ4, mitochondrial (277 aa).

Residues 1–14 constitute a mitochondrion transit peptide; sequence MLTKRALRTTDPYR. Zn(2+) is bound by residues H157, D158, H161, and E173.

This sequence belongs to the COQ4 family. Component of a multi-subunit COQ enzyme complex, composed of at least COQ3, COQ4, COQ5, COQ6, COQ7 and COQ9. Zn(2+) serves as cofactor.

It is found in the mitochondrion inner membrane. The enzyme catalyses a 4-hydroxy-3-methoxy-5-(all-trans-polyprenyl)benzoate + H(+) = a 2-methoxy-6-(all-trans-polyprenyl)phenol + CO2. It functions in the pathway cofactor biosynthesis; ubiquinone biosynthesis. In terms of biological role, lyase that catalyzes the C1-decarboxylation of 4-hydroxy-3-methoxy-5-(all-trans-polyprenyl)benzoic acid into 2-methoxy-6-(all-trans-polyprenyl)phenol during ubiquinone biosynthesis. In Ajellomyces capsulatus (strain G186AR / H82 / ATCC MYA-2454 / RMSCC 2432) (Darling's disease fungus), this protein is Ubiquinone biosynthesis protein COQ4, mitochondrial.